The sequence spans 328 residues: Endochitinase (328 aa).

The first 26 residues, 1–26 (MRRHKEVNFVAYLLFSLLVLVSAALA), serve as a signal peptide directing secretion. One can recognise a Chitin-binding type-1 domain in the interval 27-68 (QNCGSQGGGKACASGQCCSKFGWCGNTNDYCGSGNCQSQCPG). 7 cysteine pairs are disulfide-bonded: Cys29–Cys44, Cys38–Cys50, Cys43–Cys57, Cys62–Cys66, Cys100–Cys162, Cys174–Cys182, and Cys281–Cys313. The active-site Proton donor is Glu144. Positions 322-328 (ALLVDTL) are cleaved as a propeptide — removed in mature form.

This sequence belongs to the glycosyl hydrolase 19 family. Chitinase class I subfamily.

It localises to the vacuole. It carries out the reaction Random endo-hydrolysis of N-acetyl-beta-D-glucosaminide (1-&gt;4)-beta-linkages in chitin and chitodextrins.. Functionally, defense against chitin-containing fungal pathogens. This chain is Endochitinase, found in Solanum tuberosum (Potato).